We begin with the raw amino-acid sequence, 541 residues long: Glucose-6-phosphate isomerase (541 aa).

Catalysis depends on Glu346, which acts as the Proton donor. Residues His377 and Lys506 contribute to the active site.

The protein belongs to the GPI family.

Its subcellular location is the cytoplasm. The catalysed reaction is alpha-D-glucose 6-phosphate = beta-D-fructose 6-phosphate. It functions in the pathway carbohydrate biosynthesis; gluconeogenesis. Its pathway is carbohydrate degradation; glycolysis; D-glyceraldehyde 3-phosphate and glycerone phosphate from D-glucose: step 2/4. Functionally, catalyzes the reversible isomerization of glucose-6-phosphate to fructose-6-phosphate. In Rhizobium johnstonii (strain DSM 114642 / LMG 32736 / 3841) (Rhizobium leguminosarum bv. viciae), this protein is Glucose-6-phosphate isomerase.